Reading from the N-terminus, the 190-residue chain is UPF0301 protein RSc0675 (190 aa).

Belongs to the UPF0301 (AlgH) family.

The protein is UPF0301 protein RSc0675 of Ralstonia nicotianae (strain ATCC BAA-1114 / GMI1000) (Ralstonia solanacearum).